Here is an 801-residue protein sequence, read N- to C-terminus: Probable inorganic carbon transporter subunit DabA (801 aa).

Residues Cys-330, Asp-332, His-489, and Cys-504 each contribute to the Zn(2+) site.

It belongs to the inorganic carbon transporter (TC 9.A.2) DabA family. As to quaternary structure, forms a complex with DabB. The cofactor is Zn(2+).

The protein localises to the cell inner membrane. Functionally, part of an energy-coupled inorganic carbon pump. The sequence is that of Probable inorganic carbon transporter subunit DabA from Jannaschia sp. (strain CCS1).